A 1021-amino-acid polypeptide reads, in one-letter code: Outer capsid protein P3 (1021 aa).

Belongs to the phytoreovirus inner capsid protein P3 family. In terms of assembly, homodimer. Homomultimer.

It is found in the virion. The protein localises to the host cytoplasm. Functionally, capsid protein which self-assembles to form the inner icosahedral capsid with a T=2 symmetry, and consisting of 60 P3 dimers. The protein is Outer capsid protein P3 of Nephotettix cincticeps (Green rice leafhopper).